The sequence spans 162 residues: Auxin-responsive protein SAUR36 (162 aa).

This sequence belongs to the ARG7 family. Expressed in embryo, endosperm, growing hypocotyls and shoot apical meristems.

Functionally, acts a positive regulator of leaf senescence and may mediate auxin-induced leaf senescence. Plays a role in the regulation of seed germination by gibberellins and abscisic acid (ABA). Plays a role in the regulation of light-dependent hypocotyl elongation. This Arabidopsis thaliana (Mouse-ear cress) protein is Auxin-responsive protein SAUR36.